The following is a 459-amino-acid chain: Argininosuccinate lyase (459 aa).

Belongs to the lyase 1 family. Argininosuccinate lyase subfamily.

Its subcellular location is the cytoplasm. It carries out the reaction 2-(N(omega)-L-arginino)succinate = fumarate + L-arginine. It participates in amino-acid biosynthesis; L-arginine biosynthesis; L-arginine from L-ornithine and carbamoyl phosphate: step 3/3. In Staphylococcus aureus (strain Mu3 / ATCC 700698), this protein is Argininosuccinate lyase.